Here is a 257-residue protein sequence, read N- to C-terminus: RNA polymerase sigma-G factor (257 aa).

The short motif at 66–79 (DLFQVGCIGLIKSI) is the Polymerase core binding element. Positions 228 to 247 (QMEVADEIGISQAQVSRLEK) form a DNA-binding region, H-T-H motif.

This sequence belongs to the sigma-70 factor family.

Its function is as follows. Sigma factors are initiation factors that promote the attachment of RNA polymerase to specific initiation sites and are then released. This sigma factor is responsible for the expression of sporulation specific genes. The polypeptide is RNA polymerase sigma-G factor (sigG) (Clostridium acetobutylicum (strain ATCC 824 / DSM 792 / JCM 1419 / IAM 19013 / LMG 5710 / NBRC 13948 / NRRL B-527 / VKM B-1787 / 2291 / W)).